The chain runs to 447 residues: Argininosuccinate synthase (447 aa).

Residues 17–25 and Ala43 each bind ATP; that span reads AFSGGLDTS. Tyr99 serves as a coordination point for L-citrulline. ATP is bound by residues Gly129 and Thr131. 3 residues coordinate L-aspartate: Thr131, Asn135, and Asp136. Asn135 is a binding site for L-citrulline. Asp136 lines the ATP pocket. Residues Arg139 and Ser192 each contribute to the L-citrulline site. Position 194 (Asp194) interacts with ATP. Residues Thr201, Glu203, and Glu280 each coordinate L-citrulline.

The protein belongs to the argininosuccinate synthase family. Type 2 subfamily. In terms of assembly, homotetramer.

The protein localises to the cytoplasm. It carries out the reaction L-citrulline + L-aspartate + ATP = 2-(N(omega)-L-arginino)succinate + AMP + diphosphate + H(+). It participates in amino-acid biosynthesis; L-arginine biosynthesis; L-arginine from L-ornithine and carbamoyl phosphate: step 2/3. The chain is Argininosuccinate synthase from Shigella dysenteriae serotype 1 (strain Sd197).